We begin with the raw amino-acid sequence, 380 residues long: DNA primase small subunit PriS (380 aa).

Residues Asp-103, Asp-105, and Asp-284 contribute to the active site.

It belongs to the eukaryotic-type primase small subunit family. As to quaternary structure, heterodimer of a small subunit (PriS) and a large subunit (PriL). Mg(2+) serves as cofactor. The cofactor is Mn(2+).

Functionally, catalytic subunit of DNA primase, an RNA polymerase that catalyzes the synthesis of short RNA molecules used as primers for DNA polymerase during DNA replication. The small subunit contains the primase catalytic core and has DNA synthesis activity on its own. Binding to the large subunit stabilizes and modulates the activity, increasing the rate of DNA synthesis while decreasing the length of the DNA fragments, and conferring RNA synthesis capability. The DNA polymerase activity may enable DNA primase to also catalyze primer extension after primer synthesis. May also play a role in DNA repair. This is DNA primase small subunit PriS from Methanocorpusculum labreanum (strain ATCC 43576 / DSM 4855 / Z).